Consider the following 811-residue polypeptide: DEP domain-containing protein 1A (811 aa).

The region spanning 24-108 is the DEP domain; the sequence is FRAGMPLRKH…DNNQLFRFPA (85 aa). In terms of domain architecture, Rho-GAP spans 281–321; sequence DYFLDLPEPLLTFEYYELFVNILVVCGYITVSDRSSGIHKI. Serine 512 carries the post-translational modification Phosphoserine. The interaction with ZNF224 stretch occupies residues 598-653; that stretch reads AIDALQLCCLLLPPPNRRKLQLLMRMISRMSQNVDMPKLHDAMGTRSLMIHTFSRC.

Isoform 2 and isoform 5 can form homodimers and heterodimers. Interacts with ZNF224. Expressed in testis. Up-regulated in bladder cancer cells (at protein level).

The protein resides in the nucleus. Functionally, may be involved in transcriptional regulation as a transcriptional corepressor. The DEPDC1A-ZNF224 complex may play a critical role in bladder carcinogenesis by repressing the transcription of the A20 gene, leading to transport of NF-KB protein into the nucleus, resulting in suppression of apoptosis of bladder cancer cells. This is DEP domain-containing protein 1A (DEPDC1) from Homo sapiens (Human).